Here is a 297-residue protein sequence, read N- to C-terminus: Cyclin-dependent kinase 2 (297 aa).

Residues 4 to 286 (FQKVEKIGEG…AKVALTHPFF (283 aa)) enclose the Protein kinase domain. Residues 10–18 (IGEGTYGVV), Lys-33, 81–83 (EFL), and Asp-86 contribute to the ATP site. A Phosphothreonine modification is found at Thr-14. The residue at position 15 (Tyr-15) is a Phosphotyrosine. Residue Asp-127 is the Proton acceptor of the active site. ATP contacts are provided by residues 129-132 (KPQN) and Asp-145. The residue at position 160 (Thr-160) is a Phosphothreonine; by CAK.

Belongs to the protein kinase superfamily. CMGC Ser/Thr protein kinase family. CDC2/CDKX subfamily. As to quaternary structure, interacts with spdya.

The enzyme catalyses L-seryl-[protein] + ATP = O-phospho-L-seryl-[protein] + ADP + H(+). The catalysed reaction is L-threonyl-[protein] + ATP = O-phospho-L-threonyl-[protein] + ADP + H(+). With respect to regulation, phosphorylation at Thr-14 or Tyr-15 inactivates the enzyme, while phosphorylation at Thr-160 activates it. Activated by spdya. Serine/threonine-protein kinase involved in the control of the cell cycle; essential for meiosis, but dispensable for mitosis. Triggers duplication of centrosomes and DNA. Acts at the G1-S transition to promote the E2F transcriptional program and the initiation of DNA synthesis, and modulates G2 progression; controls the timing of entry into mitosis/meiosis by controlling the subsequent activation of cyclin B/CDK1 by phosphorylation, and coordinates the activation of cyclin B/CDK1 at the centrosome and in the nucleus. Crucial role in orchestrating a fine balance between cellular proliferation, cell death, and DNA repair in embryonic stem cells (ESCs). Activity of CDK2 is maximal during S phase and G2; activated by interaction with cyclin E during the early stages of DNA synthesis to permit G1-S transition, and subsequently activated by cyclin A2 (cyclin A1 in germ cells) during the late stages of DNA replication to drive the transition from S phase to mitosis, the G2 phase. The chain is Cyclin-dependent kinase 2 (cdk2) from Xenopus laevis (African clawed frog).